The following is a 66-amino-acid chain: Large ribosomal subunit protein uL29 (66 aa).

It belongs to the universal ribosomal protein uL29 family.

The polypeptide is Large ribosomal subunit protein uL29 (Borrelia turicatae (strain 91E135)).